Consider the following 106-residue polypeptide: Insulin-2 (106 aa).

The signal sequence occupies residues M1 to A23. 3 disulfide bridges follow: C30–C92, C42–C105, and C91–C96. Positions D56–M83 are cleaved as a propeptide — c peptide.

It belongs to the insulin family. As to quaternary structure, heterodimer of a B chain and an A chain linked by two disulfide bonds.

It is found in the secreted. In terms of biological role, insulin decreases blood glucose concentration. It increases cell permeability to monosaccharides, amino acids and fatty acids. It accelerates glycolysis, the pentose phosphate cycle, and glycogen synthesis in liver. This Xenopus laevis (African clawed frog) protein is Insulin-2 (ins-b).